The chain runs to 162 residues: Small ribosomal subunit protein uS12m (162 aa).

A mitochondrion-targeting transit peptide spans 1–37 (MIRFAQYARYPVISRLMKPTVISPFQAQAFSSSSVML).

The protein belongs to the universal ribosomal protein uS12 family. As to quaternary structure, component of the mitochondrial small ribosomal subunit (mt-SSU). Mature yeast 74S mitochondrial ribosomes consist of a small (37S) and a large (54S) subunit. The 37S small subunit contains a 15S ribosomal RNA (15S mt-rRNA) and at least 32 different proteins. The 54S large subunit contains a 21S rRNA (21S mt-rRNA) and at least 45 different proteins. uS12m forms part of the decoding center of the mt-SSU.

The protein localises to the mitochondrion. Functionally, component of the mitochondrial ribosome (mitoribosome), a dedicated translation machinery responsible for the synthesis of mitochondrial genome-encoded proteins, including at least some of the essential transmembrane subunits of the mitochondrial respiratory chain. The mitoribosomes are attached to the mitochondrial inner membrane and translation products are cotranslationally integrated into the membrane. uS12m is required for respiratory growth. The protein is Small ribosomal subunit protein uS12m of Schizosaccharomyces pombe (strain 972 / ATCC 24843) (Fission yeast).